A 152-amino-acid chain; its full sequence is Transcriptional regulator MraZ (152 aa).

2 SpoVT-AbrB domains span residues 5 to 52 and 81 to 124; these read ATQI…TLSE and ASEC…DEQA.

It belongs to the MraZ family. As to quaternary structure, forms oligomers.

It localises to the cytoplasm. Its subcellular location is the nucleoid. Negatively regulates its own expression and that of the subsequent genes in the proximal part of the division and cell wall (dcw) gene cluster. Acts by binding directly to DNA. May also regulate the expression of genes outside the dcw cluster. This chain is Transcriptional regulator MraZ, found in Photorhabdus laumondii subsp. laumondii (strain DSM 15139 / CIP 105565 / TT01) (Photorhabdus luminescens subsp. laumondii).